The chain runs to 268 residues: Lipopolysaccharide core heptose(I) kinase WaaP (268 aa).

Residues tyrosine 30, tyrosine 48, and tyrosine 98 each carry the phosphotyrosine; by autocatalysis modification. Residue aspartate 163 is part of the active site. 5 positions are modified to phosphotyrosine; by autocatalysis: tyrosine 165, tyrosine 211, tyrosine 231, tyrosine 258, and tyrosine 264.

It belongs to the protein kinase superfamily. KdkA/RfaP family. In terms of assembly, interacts with acyl-AcpP. The WaaP hydrophobic channel can accommodate acyl chains of different lengths, but myristyl-ACP is likely its physiological binding partner. The cofactor is Mg(2+).

It localises to the cytoplasm. The catalysed reaction is an L-alpha-D-Hep-(1-&gt;3)-L-alpha-D-Hep-(1-&gt;5)-[alpha-Kdo-(2-&gt;4)]-alpha-Kdo-(2-&gt;6)-lipid A + ATP = an L-alpha-D-Hep-(1-&gt;3)-4-O-phospho-L-alpha-D-Hep-(1-&gt;5)-[alpha-Kdo-(2-&gt;4)]-alpha-Kdo-(2-&gt;6)-lipid A + ADP + H(+). The enzyme catalyses L-tyrosyl-[protein] + ATP = O-phospho-L-tyrosyl-[protein] + ADP + H(+). The protein operates within bacterial outer membrane biogenesis; LPS core biosynthesis. With respect to regulation, acylated-acyl carrier protein (acyl-ACP) acts as a very tightly bound cofactor necessary for the production and stability of active WaaP kinase. In terms of biological role, kinase involved in the biosynthesis of the core oligosaccharide region of lipopolysaccharide (LPS). Catalyzes the phosphorylation of heptose I (HepI), the first heptose added to the Kdo2-lipid A module. Also has protein-tyrosine kinase activity: autophosphorylates on all Tyr residues; in vitro can phosphorylate poly(Glu,Tyr). The polypeptide is Lipopolysaccharide core heptose(I) kinase WaaP (Pseudomonas aeruginosa (strain ATCC 15692 / DSM 22644 / CIP 104116 / JCM 14847 / LMG 12228 / 1C / PRS 101 / PAO1)).